Here is a 558-residue protein sequence, read N- to C-terminus: Formate--tetrahydrofolate ligase (558 aa).

66–73 (TPAGEGKT) lines the ATP pocket.

It belongs to the formate--tetrahydrofolate ligase family.

It catalyses the reaction (6S)-5,6,7,8-tetrahydrofolate + formate + ATP = (6R)-10-formyltetrahydrofolate + ADP + phosphate. Its pathway is one-carbon metabolism; tetrahydrofolate interconversion. This Neisseria meningitidis serogroup B (strain ATCC BAA-335 / MC58) protein is Formate--tetrahydrofolate ligase.